Here is a 163-residue protein sequence, read N- to C-terminus: MMPGQIPDPSVTTGSLPGLGPLTGLPSSALTVEELKYADIRNLGAMIAPLHFLEVKLGKRPQPVKSELDEEEERRKRRREKNKVAAARCRNKKKERTEFLQRESERLELMNAELKTQIEELKQERQQLILMLNRHRPTCIVRTDSVKTPESEGNPLLEQLEKK.

Disordered regions lie at residues 1–20 (MMPG…PGLG) and 58–89 (GKRP…AARC). A Glycyl lysine isopeptide (Lys-Gly) (interchain with G-Cter in SUMO2) cross-link involves residue lysine 65. Residues 72–135 (EERRKRRREK…QQLILMLNRH (64 aa)) enclose the bZIP domain. The basic motif stretch occupies residues 74 to 96 (RRKRRREKNKVAAARCRNKKKER). Residues 100 to 128 (LQRESERLELMNAELKTQIEELKQERQQL) form a leucine-zipper region. A Phosphothreonine; by MAPK8 modification is found at threonine 148.

This sequence belongs to the bZIP family. ATF subfamily. In terms of assembly, forms a homodimer or heterodimer with JUN, JUNB, JUND, CEBPG and ATF2 thereby inhibiting transactivation by JUN, ATF2 and CEBPG. Binds multiple DNA elements such as cAMP-response element (CRE) and TPA response element (TRE) either as homodimer or heterodimer. Interacts with IRF2BP1. Phosphorylation of Thr-148 by MAPK8 in response to different stress conditions such as, UV irradiation, oxidatives stress and anisomycin treatments. In terms of processing, polyubiquitinated; probably by IRF2BP1.

The protein localises to the nucleus. Its function is as follows. Component of the AP-1 transcription factor that represses transactivation mediated by the Jun family of proteins. Involved in a variety of transcriptional responses associated with AP-1 such as UV-induced apoptosis, cell differentiation, tumorigenesis and antitumogeneris. Can also function as a repressor by recruiting histone deacetylase 3/HDAC3 to the promoter region of JUN. May control transcription via direct regulation of the modification of histones and the assembly of chromatin. This Homo sapiens (Human) protein is Jun dimerization protein 2 (JDP2).